A 708-amino-acid chain; its full sequence is Exocyst complex component 5 (708 aa).

A2 carries the post-translational modification N-acetylalanine. Residues 40-101 (KRLLEEFVNH…AFQHFQELDE (62 aa)) adopt a coiled-coil conformation. T122, T395, and T405 each carry phosphothreonine. S412 is subject to Phosphoserine.

This sequence belongs to the SEC10 family. The exocyst complex is composed of EXOC1, EXOC2, EXOC3, EXOC4, EXOC5, EXOC6, EXOC7 and EXOC8. Interacts with EXOC3L1. Ubiquitous.

Its subcellular location is the cytoplasm. It localises to the midbody. Functionally, component of the exocyst complex involved in the docking of exocytic vesicles with fusion sites on the plasma membrane. The sequence is that of Exocyst complex component 5 (Exoc5) from Rattus norvegicus (Rat).